The sequence spans 119 residues: Hemerythrin subunit B (119 aa).

The Fe cation site is built by His-26, His-55, Glu-59, His-74, His-78, His-107, and Asp-112.

It belongs to the hemerythrin family.

Functionally, hemerythrin is a respiratory protein in blood cells of certain marine worms. The oxygen-binding site in each chain contains two iron atoms. This chain is Hemerythrin subunit B, found in Sipunculus nudus (Sipunculan worm).